Consider the following 100-residue polypeptide: Replication restart protein PriB (100 aa).

The 99-residue stretch at 1–99 (MGFNNLVSLA…LRIQNIKEYK (99 aa)) folds into the SSB domain.

This sequence belongs to the PriB family. In terms of assembly, homodimer. Interacts with PriA and DnaT. Component of the replication restart primosome. Primosome assembly occurs via a 'hand-off' mechanism. PriA binds to replication forks, subsequently PriB then DnaT bind; DnaT then displaces ssDNA to generate the helicase loading substrate.

Its function is as follows. Involved in the restart of stalled replication forks, which reloads the replicative helicase on sites other than the origin of replication; the PriA-PriB pathway is the major replication restart pathway. During primosome assembly it facilitates complex formation between PriA and DnaT on DNA; stabilizes PriA on DNA. Stimulates the DNA unwinding activity of PriA helicase. This is Replication restart protein PriB from Neisseria meningitidis serogroup C (strain 053442).